Consider the following 995-residue polypeptide: ATP-dependent RNA helicase DBP10 (995 aa).

The interval methionine 1–valine 120 is disordered. 2 stretches are compositionally biased toward acidic residues: residues glutamate 12 to alanine 25 and serine 37 to alanine 50. Residues valine 71–aspartate 81 show a composition bias toward basic and acidic residues. Phosphoserine is present on serine 101. Residues glycine 137 to arginine 165 carry the Q motif motif. In terms of domain architecture, Helicase ATP-binding spans isoleucine 168–valine 340. Alanine 181–threonine 188 contributes to the ATP binding site. Residues aspartate 288–aspartate 291 carry the DEAD box motif. 2 disordered regions span residues leucine 389 to asparagine 427 and glycine 889 to arginine 973. 2 positions are modified to phosphoserine: serine 398 and serine 400. 2 stretches are compositionally biased toward basic residues: residues glutamine 407–lysine 422 and valine 914–lysine 924. Positions phenylalanine 418–methionine 568 constitute a Helicase C-terminal domain. The segment covering serine 964 to arginine 973 has biased composition (basic and acidic residues).

Belongs to the DEAD box helicase family. DDX54/DBP10 subfamily. Interacts with RRP1 and associates with pre-ribosomal particles.

It is found in the nucleus. The protein resides in the nucleolus. It carries out the reaction ATP + H2O = ADP + phosphate + H(+). Functionally, ATP-binding RNA helicase involved in the biogenesis of 60S ribosomal subunits and is required for the normal formation of 25S and 5.8S rRNAs. This chain is ATP-dependent RNA helicase DBP10 (DBP10), found in Saccharomyces cerevisiae (strain ATCC 204508 / S288c) (Baker's yeast).